A 430-amino-acid chain; its full sequence is MDRIRIVGGNQLHGVIPISGAKNAALPLMIASLLTDDTLTLENVPHLADVEQLIRILGNHGADISVNGRRERQGESYARTIHFTSRNIVSTTAPYELVSKMRASFWVIGPLLAREGKARVSLPGGCAIGTRPVDLFIEGLTALGANIEIDGGYVNATAPEGGLTGGRYVFPKVSVGATHVLMMAATLANGTTVIGNAAREPEVADLAKCLNAMGAKITGAGTGTITIEGVRSLSGARHRVLPDRIETGTYAMAVAMTGGDVILEDTEASLLDTALEAIRRAGAEISETNSGIRVVRNGAGIRPVDIVTDPFPGFPTDLQAQFMGLMTKSSGVSHITETIFENRFMHVQELARLGAKISLSGQTAKIEGVGRLKGAPVMATDLRASVSLVIAGLAAEGETMVSRVYHLDRGFERLEEKLTRCGAHVERVSD.

22-23 (KN) provides a ligand contact to phosphoenolpyruvate. A UDP-N-acetyl-alpha-D-glucosamine-binding site is contributed by R102. The Proton donor role is filled by C126. At C126 the chain carries 2-(S-cysteinyl)pyruvic acid O-phosphothioketal. UDP-N-acetyl-alpha-D-glucosamine contacts are provided by residues 131 to 135 (RPVDL), 172 to 175 (KVSV), D317, and I339.

It belongs to the EPSP synthase family. MurA subfamily.

The protein localises to the cytoplasm. It carries out the reaction phosphoenolpyruvate + UDP-N-acetyl-alpha-D-glucosamine = UDP-N-acetyl-3-O-(1-carboxyvinyl)-alpha-D-glucosamine + phosphate. The protein operates within cell wall biogenesis; peptidoglycan biosynthesis. Functionally, cell wall formation. Adds enolpyruvyl to UDP-N-acetylglucosamine. This chain is UDP-N-acetylglucosamine 1-carboxyvinyltransferase, found in Sinorhizobium fredii (strain NBRC 101917 / NGR234).